The following is a 590-amino-acid chain: Cytosolic Fe-S cluster assembly factor nar1 (590 aa).

The [4Fe-4S] cluster site is built by C20, C62, C65, C68, C214, C269, C456, and C460.

The protein belongs to the NARF family.

Component of the cytosolic Fe/S protein assembly machinery. Required for maturation of extramitochondrial Fe/S proteins. May play a role in the transfer of pre-assembled Fe/S clusters to target apoproteins. This Talaromyces marneffei (strain ATCC 18224 / CBS 334.59 / QM 7333) (Penicillium marneffei) protein is Cytosolic Fe-S cluster assembly factor nar1 (nar1).